Reading from the N-terminus, the 156-residue chain is Ribosome maturation factor RimP (156 aa).

The protein belongs to the RimP family.

It localises to the cytoplasm. Its function is as follows. Required for maturation of 30S ribosomal subunits. The protein is Ribosome maturation factor RimP of Bacillus subtilis (strain 168).